A 251-amino-acid polypeptide reads, in one-letter code: ATP synthase subunit a 2 (251 aa).

The next 5 membrane-spanning stretches (helical) occupy residues 35–55 (GQVF…SLLA), 94–114 (LPFI…GSLI), 133–153 (INTT…AGLS), 198–218 (LVVA…LMAL), and 219–239 (GLFT…AYIH).

It belongs to the ATPase A chain family. In terms of assembly, F-type ATPases have 2 components, CF(1) - the catalytic core - and CF(0) - the membrane proton channel. CF(1) has five subunits: alpha(3), beta(3), gamma(1), delta(1), epsilon(1). CF(0) has four main subunits: a, b, b' and c.

It is found in the cellular thylakoid membrane. Functionally, key component of the proton channel; it plays a direct role in the translocation of protons across the membrane. The polypeptide is ATP synthase subunit a 2 (Crocosphaera subtropica (strain ATCC 51142 / BH68) (Cyanothece sp. (strain ATCC 51142))).